Consider the following 336-residue polypeptide: UDP-3-O-acylglucosamine N-acyltransferase (336 aa).

Residue H237 is the Proton acceptor of the active site.

The protein belongs to the transferase hexapeptide repeat family. LpxD subfamily. In terms of assembly, homotrimer.

The catalysed reaction is a UDP-3-O-[(3R)-3-hydroxyacyl]-alpha-D-glucosamine + a (3R)-hydroxyacyl-[ACP] = a UDP-2-N,3-O-bis[(3R)-3-hydroxyacyl]-alpha-D-glucosamine + holo-[ACP] + H(+). Its pathway is bacterial outer membrane biogenesis; LPS lipid A biosynthesis. Functionally, catalyzes the N-acylation of UDP-3-O-acylglucosamine using 3-hydroxyacyl-ACP as the acyl donor. Is involved in the biosynthesis of lipid A, a phosphorylated glycolipid that anchors the lipopolysaccharide to the outer membrane of the cell. This Alcanivorax borkumensis (strain ATCC 700651 / DSM 11573 / NCIMB 13689 / SK2) protein is UDP-3-O-acylglucosamine N-acyltransferase.